The following is an 81-amino-acid chain: Defensin-like protein 130 (81 aa).

The N-terminal stretch at 1–21 is a signal peptide; that stretch reads MTKNTSLTIFMVVLVIGMLYT. Intrachain disulfides connect cysteine 32-cysteine 81, cysteine 41-cysteine 63, cysteine 46-cysteine 75, and cysteine 50-cysteine 77.

It belongs to the DEFL family.

It is found in the secreted. In Arabidopsis thaliana (Mouse-ear cress), this protein is Defensin-like protein 130 (LCR28).